The primary structure comprises 488 residues: Acetyl-coenzyme A carboxylase carboxyl transferase subunit beta, chloroplastic (488 aa).

In terms of domain architecture, CoA carboxyltransferase N-terminal spans 227–488 (LWIQCDNCYG…LHAFFPLNTN (262 aa)). Positions 231, 234, 247, and 250 each coordinate Zn(2+). A C4-type zinc finger spans residues 231-250 (CDNCYGLMYKKVKMNVCEQC).

The protein belongs to the AccD/PCCB family. As to quaternary structure, acetyl-CoA carboxylase is a heterohexamer composed of biotin carboxyl carrier protein, biotin carboxylase and 2 subunits each of ACCase subunit alpha and ACCase plastid-coded subunit beta (accD). It depends on Zn(2+) as a cofactor. As to expression, accumulates in fatty acids synthesizing tissues such as embryos, expanding leaves, flower buds, flowers, and developing siliques.

It is found in the plastid. Its subcellular location is the chloroplast membrane. It localises to the chloroplast stroma. It carries out the reaction N(6)-carboxybiotinyl-L-lysyl-[protein] + acetyl-CoA = N(6)-biotinyl-L-lysyl-[protein] + malonyl-CoA. It participates in lipid metabolism; malonyl-CoA biosynthesis; malonyl-CoA from acetyl-CoA: step 1/1. Its function is as follows. Component of the acetyl coenzyme A carboxylase (ACC) complex. Biotin carboxylase (BC) catalyzes the carboxylation of biotin on its carrier protein (BCCP) and then the CO(2) group is transferred by the transcarboxylase to acetyl-CoA to form malonyl-CoA. In Arabidopsis thaliana (Mouse-ear cress), this protein is Acetyl-coenzyme A carboxylase carboxyl transferase subunit beta, chloroplastic.